Reading from the N-terminus, the 312-residue chain is Methionyl-tRNA formyltransferase (312 aa).

A (6S)-5,6,7,8-tetrahydrofolate-binding site is contributed by 109–112; it reads SLLP.

The protein belongs to the Fmt family.

The enzyme catalyses L-methionyl-tRNA(fMet) + (6R)-10-formyltetrahydrofolate = N-formyl-L-methionyl-tRNA(fMet) + (6S)-5,6,7,8-tetrahydrofolate + H(+). Its function is as follows. Attaches a formyl group to the free amino group of methionyl-tRNA(fMet). The formyl group appears to play a dual role in the initiator identity of N-formylmethionyl-tRNA by promoting its recognition by IF2 and preventing the misappropriation of this tRNA by the elongation apparatus. The protein is Methionyl-tRNA formyltransferase of Listeria monocytogenes serovar 1/2a (strain ATCC BAA-679 / EGD-e).